Here is a 187-residue protein sequence, read N- to C-terminus: High affinity copper uptake protein 1 (187 aa).

The Extracellular segment spans residues 1–65; that stretch reads MRMNHMEMHH…SSLVINTPGE (65 aa). The Bis-His motif signature appears at 9–10; that stretch reads HH. Residue Asn-19 is glycosylated (N-linked (GlcNAc...) asparagine). An O-linked (GalNAc...) threonine glycan is attached at Thr-30. A helical membrane pass occupies residues 66–86; that stretch reads MAGAFVAVFLLAMFYEGLKIA. Residues 87–129 lie on the Cytoplasmic side of the membrane; sequence REGLLRKSQVSIRYNSMPVPGPNGTILMETHKTVGQQMLSFPH. The residue at position 111 (Thr-111) is a Phosphothreonine. The helical transmembrane segment at 130 to 150 threads the bilayer; sequence LLQTVLHIIQVVISYFLMLIF. The Extracellular segment spans residues 151–153; that stretch reads MTY. Residues 154–174 traverse the membrane as a helical segment; that stretch reads NGYLCIAVAAGAGTGYFLFSW. Residues 175-187 lie on the Cytoplasmic side of the membrane; it reads KKAVVVDITEHCH. Residue Cys-186 is modified to Cysteine sulfenic acid (-SOH).

Belongs to the copper transporter (Ctr) (TC 1.A.56) family. SLC31A subfamily. Homotrimer; is stabilized by cisplatin via interactions between cisplatin and the methionine-rich clusters, and could be crucial for the copper(2+) reduction process and copper(1+) stabilization. Heterotrimer between SLC31A1, CCS and SOD1; this heterotrimer is copper(1+)-mediated and its maintenance is regulated through SOD1 activation. Interacts with KDR; this interaction is induced upon VEGFA stimulation leading to SLC31A1 and KDR subsequent co-internalization to early endosomes, thereby activating KDR downstream signaling in endothelial cells. Interacts (via C-terminal domain) with ATOX1 (via dimer form); this interaction improves ATOX1 stability and controls intracellular copper(1+) levels. Interacts with SLC31A2; this interaction stabilizes SLC31A2 and protects its from ubiquitination and degradation. Interacts (via C-terminal domain) with CCS; this interaction is copper(1+)-mediated. Post-translationally, O-Glycosylation at Thr-30 protects from proteolytic cleavage in the N-terminal extracellular domain. In terms of processing, proteolytic cleavage, leading to a truncated form, is facilitated by SLC31A2 and initiated preferentially by CTSL and to a minor extend by CTSB in endolysosomal compartments. A post-CTSL/cathepsin L processing occurs to yield to the fully truncated form. Sulfenylated at Cys-186 after stimulation with VEGFA, which induces SLC31A1-KDR disulfide bond formation and their co-internalization to early endosomes, driving to a sustained VEGFR2 signaling.

The protein localises to the cell membrane. Its subcellular location is the early endosome membrane. It localises to the recycling endosome membrane. It is found in the apical cell membrane. The protein resides in the late endosome membrane. The protein localises to the basolateral cell membrane. It carries out the reaction Cu(+)(out) = Cu(+)(in). The catalysed reaction is Ag(+)(out) = Ag(+)(in). Copper uptake is inhibited by cold temperature, silver and zinc ions. Platinum-containing chemotherapeutic agents uptake is inhibited by cold temperature and copper. In terms of biological role, uniporter that mediates the transport of copper(1+) from the extracellular space to the cytoplasm, across the plasma membrane. Then, delivers directly copper(1+) to specific chaperone such as ATOX1, via a copper(1+)- mediated transient interaction between the C-terminal domain and a copper(1+) chaperone, thus controlling intracellular copper(1+) levels. May function in copper(1+) import from the apical membrane thus may drive intestinal copper absorption. The copper(1+) transport mechanism is sodium-independent, saturable and of high-affinity. Also mediates the uptake of silver(1+). May function in the influx of the platinum-containing chemotherapeutic agents. The platinum-containing chemotherapeutic agents uptake is saturable. Also participates in the first step of copper(2+) acquisition by cells through a direct transfer of copper(2+) from copper(2+) carriers in blood, such as ALB to the N-terminal domain of SLC31A1, leading to copper(2+) reduction and probably followed by copper(1+) stabilization. In addition, functions as a redox sensor to promote angiogenesis in endothelial cells, in a copper(1+) transport independent manner, by transmitting the VEGF-induced ROS signal through a sulfenylation at Cys-189 leading to a subsequent disulfide bond formation between SLC31A1 and KDR. The SLC31A1-KDR complex is then co-internalized to early endosomes, driving a sustained VEGFR2 signaling. Its function is as follows. Mobilizes copper(1+) out of the endosomal compartment, making copper(1+) available for export out of the cells. The sequence is that of High affinity copper uptake protein 1 from Rattus norvegicus (Rat).